A 234-amino-acid polypeptide reads, in one-letter code: 2,3,4,5-tetrahydropyridine-2,6-dicarboxylate N-acetyltransferase (234 aa).

This sequence belongs to the transferase hexapeptide repeat family. DapH subfamily.

The enzyme catalyses (S)-2,3,4,5-tetrahydrodipicolinate + acetyl-CoA + H2O = L-2-acetamido-6-oxoheptanedioate + CoA. Its pathway is amino-acid biosynthesis; L-lysine biosynthesis via DAP pathway; LL-2,6-diaminopimelate from (S)-tetrahydrodipicolinate (acetylase route): step 1/3. In terms of biological role, catalyzes the transfer of an acetyl group from acetyl-CoA to tetrahydrodipicolinate. The polypeptide is 2,3,4,5-tetrahydropyridine-2,6-dicarboxylate N-acetyltransferase (Lacticaseibacillus paracasei (strain ATCC 334 / BCRC 17002 / CCUG 31169 / CIP 107868 / KCTC 3260 / NRRL B-441) (Lactobacillus paracasei)).